A 478-amino-acid polypeptide reads, in one-letter code: Calcium/calmodulin-dependent protein kinase type II subunit alpha (478 aa).

Y13 is subject to Phosphotyrosine. The Protein kinase domain maps to Y13–I271. ATP is bound by residues L19–V27 and K42. D135 serves as the catalytic Proton acceptor. Residue S257 is modified to Phosphoserine. T286 is modified (phosphothreonine; by autocatalysis). The calmodulin-binding stretch occupies residues L290 to K300. The interval T310–G320 is interaction with BAALC. Residues S314–E341 form a disordered region. The segment covering K322 to S331 has biased composition (basic and acidic residues). A phosphoserine mark is found at S330, S331, and S333. Phosphothreonine occurs at positions 336 and 337. S404 carries the phosphoserine modification.

This sequence belongs to the protein kinase superfamily. CAMK Ser/Thr protein kinase family. CaMK subfamily. As to quaternary structure, there are 4 genes encoding calcium/calmodulin-dependent protein kinase type II chains: CAMK2A, CAMK2B, CAMK2G and CAMK2D. The corresponding proteins assemble into homo- or heteromultimeric holoenzymes composed of 12 subunits with two hexameric rings stacked one on top of the other. Interacts with BAALC. Interacts with MPDZ. Interacts with SYN1. Interacts with CAMK2N2. Interacts with SYNGAP1. Interacts with SYNPO2. Interacts with SHANK3. Interacts with GRIN2B. Interacts with CACNB2. Interacts with LRRC7. Interacts with GRM5. Interacts with DAGLA (via C-terminal); this interaction is enhanced by autophosphorylation of CAMK2A at Thr-286. Interacts with CAMK2N1; this interaction requires CAMK2A activation by Ca(2+). It depends on Mg(2+) as a cofactor. Post-translationally, autophosphorylation of Thr-286 following activation by Ca(2+)/calmodulin. Phosphorylation of Thr-286 locks the kinase into an activated state. In terms of processing, palmitoylated. Probably palmitoylated by ZDHHC3 and ZDHHC7. In terms of tissue distribution, expressed in brain. Expressed in skeletal muscle.

The protein resides in the cytoplasm. It is found in the synapse. It localises to the postsynaptic density. The protein localises to the cell projection. Its subcellular location is the dendritic spine. The protein resides in the dendrite. The catalysed reaction is L-seryl-[protein] + ATP = O-phospho-L-seryl-[protein] + ADP + H(+). It catalyses the reaction L-threonyl-[protein] + ATP = O-phospho-L-threonyl-[protein] + ADP + H(+). Its activity is regulated as follows. Activated by Ca(2+)/calmodulin. Binding of calmodulin results in conformational change that relieves intrasteric autoinhibition and allows autophosphorylation of Thr-286 which turns the kinase in a constitutively active form and confers to the kinase a Ca(2+)-independent activity. Its function is as follows. Calcium/calmodulin-dependent protein kinase that functions autonomously after Ca(2+)/calmodulin-binding and autophosphorylation, and is involved in various processes, such as synaptic plasticity, neurotransmitter release and long-term potentiation. Member of the NMDAR signaling complex in excitatory synapses, it regulates NMDAR-dependent potentiation of the AMPAR and therefore excitatory synaptic transmission. Regulates dendritic spine development. Also regulates the migration of developing neurons. Phosphorylates the transcription factor FOXO3 to activate its transcriptional activity. Phosphorylates the transcription factor ETS1 in response to calcium signaling, thereby decreasing ETS1 affinity for DNA. In response to interferon-gamma (IFN-gamma) stimulation, catalyzes phosphorylation of STAT1, stimulating the JAK-STAT signaling pathway. In response to interferon-beta (IFN-beta) stimulation, stimulates the JAK-STAT signaling pathway. Acts as a negative regulator of 2-arachidonoylglycerol (2-AG)-mediated synaptic signaling via modulation of DAGLA activity. Has no kinase activity. This Mus musculus (Mouse) protein is Calcium/calmodulin-dependent protein kinase type II subunit alpha (Camk2a).